We begin with the raw amino-acid sequence, 976 residues long: Villin-2 (976 aa).

Gelsolin-like repeat units lie at residues 27–77 (FEAV…DEAG), 148–188 (IRLK…QERA), 260–302 (GKME…DERK), 399–450 (GKVK…EDQD), 531–571 (NKAV…EQLE), and 633–674 (FQVE…KEKQ). The segment at 769-917 (NSSSNRPAYS…SEIQPSGATF (149 aa)) is disordered. The span at 782–794 (RLNESHDGPRQRA) shows a compositional bias: basic and acidic residues. Low complexity-rich tracts occupy residues 795 to 812 (EALA…SSTK), 823 to 841 (SQAS…VLVA), and 848 to 858 (DTSPTRRSTSS). Ser890 carries the phosphoserine modification. Positions 908-917 (SEIQPSGATF) are enriched in polar residues. The HP domain occupies 911–976 (QPSGATFTYE…DLLKKKFDLF (66 aa)).

This sequence belongs to the villin/gelsolin family. In terms of tissue distribution, expressed in all tissues examined. Mainly detected in the root epidermis and vasculature. Expressed in the root cap.

Its subcellular location is the cytoplasm. The protein resides in the cytoskeleton. In terms of biological role, ca(2+)-regulated actin-binding protein. Involved in actin filaments bundling. Caps the barbed end of actin filaments and is able to sever them in a calcium-dependent manner. Required for the construction of actin collars in pollen tubes. Acts redundantly with VLN5 (AC Q9LVC6) to generate thick actin filament bundles and to regulate polarized pollen tube growth. Acts redundantly with VLN3 (AC O81645) to regulate directional organ growth and in sclerenchyma development. In Arabidopsis thaliana (Mouse-ear cress), this protein is Villin-2.